We begin with the raw amino-acid sequence, 391 residues long: Ectodysplasin-A (391 aa).

Over residues 1–21 the composition is skewed to basic and acidic residues; it reads MGYPEVERREPLPAAAPRERG. The interval 1 to 28 is disordered; sequence MGYPEVERREPLPAAAPRERGSQGCGCR. Over 1 to 41 the chain is Cytoplasmic; sequence MGYPEVERREPLPAAAPRERGSQGCGCRGAPARAGEGNSCR. Residues 42–62 traverse the membrane as a helical; Signal-anchor for type II membrane protein segment; sequence LFLGFFGLSLALHLLTLCCYL. The Extracellular segment spans residues 63 to 391; it reads ELRSELRRER…AIRLGEAPAS (329 aa). Disordered regions lie at residues 72–129 and 146–244; these read RGTE…DSQD and YSEE…TGTR. Residues 86–96 are compositionally biased toward low complexity; the sequence is TSGTLSSPGSL. Residues 180–229 form the Collagen-like domain; sequence GPPGPNGPPGPPGPPGPQGPPGIPGIPGIPGTTVMGPPGPPGPPGPQGPP. Pro residues-rich tracts occupy residues 181 to 203 and 216 to 228; these read PPGPNGPPGPPGPPGPQGPPGIP and PPGPPGPPGPQGP. The 137-residue stretch at 249–385 folds into the THD domain; that stretch reads AVVHLQGQGS…HTTFFGAIRL (137 aa). N-linked (GlcNAc...) asparagine glycosylation occurs at Asn-313. An intrachain disulfide couples Cys-332 to Cys-346. A glycan (N-linked (GlcNAc...) asparagine) is linked at Asn-372.

The protein belongs to the tumor necrosis factor family. In terms of assembly, homotrimer. The homotrimers may then dimerize and form higher-order oligomers. N-glycosylated. In terms of processing, processing by furin produces a secreted form.

The protein localises to the cell membrane. The protein resides in the secreted. In terms of biological role, cytokine which is involved in epithelial-mesenchymal signaling during morphogenesis of ectodermal organs. Functions as a ligand activating the DEATH-domain containing receptors EDAR and EDA2R. Isoform TAA binds only to the receptor EDAR, while isoform TA-A2 binds exclusively to the receptor EDA2R. May also play a role in cell adhesion. Functionally, isoform TAA binds only to the receptor EDAR, while isoform TA-A2 binds exclusively to the receptor EDA2R. Isoform TA-A2 binds exclusively to the receptor EDA2R. This Mus musculus (Mouse) protein is Ectodysplasin-A (Eda).